A 264-amino-acid polypeptide reads, in one-letter code: Regulatory protein RecX (264 aa).

The protein belongs to the RecX family.

It localises to the cytoplasm. Modulates RecA activity. This is Regulatory protein RecX from Limosilactobacillus reuteri (strain DSM 20016) (Lactobacillus reuteri).